The sequence spans 406 residues: DAZ-associated protein 1 (406 aa).

At Met-1 the chain carries N-acetylmethionine. RRM domains follow at residues 10 to 97 and 113 to 190; these read GKLF…RTRP and NKIF…RAEP. Residues 74-117 are disordered; the sequence is TLDGRNIDPKPCTPRGMQPERTRPKEGWQKGPRSDSSKSNKIFV. Over residues 91-111 the composition is skewed to basic and acidic residues; sequence QPERTRPKEGWQKGPRSDSSK. Lys-150 carries the N6-acetyllysine modification. The disordered stretch occupies residues 186-406; sequence KRAEPRDSKN…NVQGFHPYRR (221 aa). Positions 195–207 are enriched in polar residues; sequence NQAPGQPGASQWG. Residues 247–262 are compositionally biased toward pro residues; that stretch reads GPPPAGRGAPPPPPPF. Omega-N-methylarginine is present on Arg-253. The span at 280-294 shows a compositional bias: low complexity; sequence FPQGYGAPPQFSFGY. Over residues 295–315 the composition is skewed to pro residues; sequence GPPPPPPDQFAPPGVPPPPAT. A compositionally biased stretch (low complexity) spans 363–378; it reads SDPSQQPPSYGGPSVP. The segment covering 379–392 has biased composition (gly residues); sequence GSGGPPAGGSGFGR.

As to quaternary structure, interacts with DAZ and DAZL. In terms of processing, acetylation at Lys-150 is predominantly observed in the nuclear fraction, and may regulate nucleocytoplasmic transport. In terms of tissue distribution, mainly expressed in testis. Expressed at much lower level in liver, heart and brain. Also expressed in ovary. Expressed throughout testes development, in both the prenatal and postnatal periods.

It localises to the cytoplasm. The protein localises to the nucleus. Its function is as follows. RNA-binding protein, which may be required during spermatogenesis. The polypeptide is DAZ-associated protein 1 (Dazap1) (Mus musculus (Mouse)).